The chain runs to 124 residues: MSSNMQAMKQMRPALVSLTQQQARRRCFKLYRNCIRSIPHLIQHYNLSYNMSEMRNRFRSNFVEFEEVTEKNQLDRLAFIGETELFDAMSLLKTRSHVVNYFDTQPVNAKTISESEKLLNNFFE.

It belongs to the complex I LYR family.

The protein resides in the mitochondrion inner membrane. Accessory subunit of the mitochondrial membrane respiratory chain NADH dehydrogenase (Complex I), that is believed to be not involved in catalysis. Complex I functions in the transfer of electrons from NADH to the respiratory chain. The immediate electron acceptor for the enzyme is believed to be ubiquinone. This chain is NADH dehydrogenase [ubiquinone] 1 alpha subcomplex subunit 6 (ndufa6), found in Dictyostelium discoideum (Social amoeba).